The chain runs to 361 residues: Dynein axonemal assembly factor 8 (361 aa).

2 disordered regions span residues 65–191 and 309–334; these read DPAG…ERRK and AQPG…RRPL. Over residues 136–157 the composition is skewed to polar residues; it reads TLNTSASQSPRQGPQGEATRSP. Serine 142 and serine 144 each carry phosphoserine. Positions 321–334 are enriched in low complexity; sequence GSSSSSGHLGRRPL.

The protein localises to the dynein axonemal particle. The protein resides in the cytoplasm. In terms of biological role, in cyliated cells, dynein axonemal particle-specific protein required for deployment of ODA to the axoneme. Interacts with outer dynein arm (ODA) subunits. In Bos taurus (Bovine), this protein is Dynein axonemal assembly factor 8 (DNAAF8).